The chain runs to 576 residues: Glucoamylase ARB_02327-1 (576 aa).

Positions 1 to 20 are cleaved as a signal peptide; the sequence is MGLASTVSLALLGLCSLARA. Residue tryptophan 141 coordinates substrate. Asparagine 168 and asparagine 192 each carry an N-linked (GlcNAc...) asparagine glycan. Aspartate 197 (proton acceptor) is an active-site residue. Glutamate 200 serves as the catalytic Proton donor. Disulfide bonds link cysteine 243-cysteine 470 and cysteine 285-cysteine 293. One can recognise a CBM20 domain in the interval 477–576; that stretch reads GSGGDTVAVT…GSFTQNDTWR (100 aa). Residues 552 to 576 form a disordered region; sequence TWESDPNRSITTSASGSFTQNDTWR. Asparagine 558 and asparagine 572 each carry an N-linked (GlcNAc...) asparagine glycan.

It belongs to the glycosyl hydrolase 15 family.

It localises to the secreted. The catalysed reaction is Hydrolysis of terminal (1-&gt;4)-linked alpha-D-glucose residues successively from non-reducing ends of the chains with release of beta-D-glucose.. The polypeptide is Glucoamylase ARB_02327-1 (Schizophyllum commune (strain H4-8 / FGSC 9210) (Split gill fungus)).